Consider the following 609-residue polypeptide: Replication protein A 70 kDa DNA-binding subunit (609 aa).

Residues 113-163 (GNPQPYNDGQPQPAAPAPASAPAPAPSKLQNNSAPPPSMNRGTSKLFGGGS) form a disordered region. Residues 125–137 (PAAPAPASAPAPA) are compositionally biased toward pro residues. The OB DNA-binding region spans 188-272 (WTVRARVTNK…VKNDYEMTFN (85 aa)). The segment at 472–494 (CPSQDCNKKVIDQQNGLFRCEKC) adopts a C4-type zinc-finger fold.

The protein belongs to the replication factor A protein 1 family. Component of the heterotrimeric canonical replication protein A complex (RPA). Interacts with rpain-a.

The protein resides in the nucleus. It localises to the PML body. Its function is as follows. As part of the heterotrimeric replication protein A complex (RPA/RP-A), binds and stabilizes single-stranded DNA intermediates, that form during DNA replication or upon DNA stress. It prevents their reannealing and in parallel, recruits and activates different proteins and complexes involved in DNA metabolism. Thereby, it plays an essential role both in DNA replication and the cellular response to DNA damage. The sequence is that of Replication protein A 70 kDa DNA-binding subunit (rpa1) from Xenopus laevis (African clawed frog).